The following is a 429-amino-acid chain: MKLQKPKGTQDILPAESAKWQYVEGFAREIFKRYNYAEVRTPIFEHYEVISRSVGDTTDIVTKEMYDFYDKGDRHITLRPEGTAPVVRSYVENKLFAPEVQKPSKFYYMGPMFRYERPQAGRLRQFHQIGVECFGSSNPATDVETIAMAAHFLKEIGIQGVKLHLNTLGNPESRAAYRQALIDYLTPLKETLSKDSQRRLEENPLRVLDSKEKEDKVAVENAPSILDFLDEESQTHFDAVRQMLENLGVDYIIDTNMVRGLDYYNHTIFEFITEIEGNDLTVCAGGRYDGLVAYFGGPETAGFGFGLGVERLLLILEKQGVTLPIENALDVYIAVLGEGANAKALELVQALRQQGFKAERDYLNRKLKAQFKSADVFVAKTLITLGESEVESGQVTVKNNQTREEVQVSLETISQNFSEIFEKLGFYTQ.

This sequence belongs to the class-II aminoacyl-tRNA synthetase family. In terms of assembly, homodimer.

Its subcellular location is the cytoplasm. The enzyme catalyses tRNA(His) + L-histidine + ATP = L-histidyl-tRNA(His) + AMP + diphosphate + H(+). This Streptococcus pneumoniae (strain Hungary19A-6) protein is Histidine--tRNA ligase.